A 902-amino-acid chain; its full sequence is MSYNVIVPTTVLPPWLRIGQNWIFARHRRTEVGVVLPANTKFRVRADFAKWGITRPVIVRLLNNNRNTEREINLTNDQWIEMEHEHECVPFVDWPVGEKNTMAEVHFEIDGPHIPLPVYVFNTRPVENFKSEYRQSSSGYCFLYLDLVCILVPPASKNVLLDTDLFELHQFYNEIINYYDDLCGLVEDPYADTVDSNLPNKAAFVKADGGGPGGAYYGAFWTAPASTNLGEYLRVSPTNWMVIHELGHAYDFVFTVNTRLIEIWNNSFCDRIQYTWMNKTKRQQLARIYENQRPQKEAAIQALIDNNVPFDNWDFFEKLSIFAWLYNPQRGLDTLRNINHSYRLHAARNPVTPYPQIWAWLMSCGYDNFWLYFNRIGLYPADFYINEHNKVVHFNLHMRALALGQSVRYPIKYIITDFDLLQKNYDIKQYLESNFDLVIPEELRQTDLVADVRVVCVIDDPSQIIGEPFSLYDGNERVFESTVATDGNMYLVGVGPGVYTLRAPRGKDKRYKLHLAHSPNEPVHPANDHMYLLVTYPYYNQTLTYTRYITSDLAIDAAHLFGTDRLYVATIYFDALQQTVTVYLNNIRTGRENNTTLYFEMEIHNPFIGTSSKFTLLEDNVTMRQGYYKFPAVTFSSIRLHIRDDNRLMLVDKYLPAGDTLLFMFPNQIVDNNIFPDGSILTSTYNRIKEQAAFIENHKQLLYIENELRDSIYLASQFVNSDSNEFLKYFPDYFRDPHTFSYLFRFRGLGDFMLLELQIVPILNLASVRVGNHHNGPHSYFNTTYLSVEVRDTSGGVVFSYSRLGNEPMTHEHHKFEVFKDYTIHLFIQEPGQRLQLIVNKTLDTALPNSQNIYARLTATQLVVGEQSIIISDDNDFVPPPPRVNCGDQQIRVVETLKMIAF.

The region spanning 27–330 (HRRTEVGVVL…IFAWLYNPQR (304 aa)) is the Peptidase M60 domain. N-linked (GlcNAc...) asparagine; by host glycosylation is found at Asn-73, Asn-265, Asn-278, Asn-339, Asn-540, Asn-593, Asn-594, Asn-620, Asn-782, and Asn-840.

In terms of biological role, involved in disruption of the peritrophic membrane and fusion of nucleocapsids with midgut cells. This Heliothis (HaGV) protein is Viral-enhancing factor (VEF).